Consider the following 105-residue polypeptide: Large ribosomal subunit protein uL24 (105 aa).

It belongs to the universal ribosomal protein uL24 family. Part of the 50S ribosomal subunit.

In terms of biological role, one of two assembly initiator proteins, it binds directly to the 5'-end of the 23S rRNA, where it nucleates assembly of the 50S subunit. Its function is as follows. One of the proteins that surrounds the polypeptide exit tunnel on the outside of the subunit. The polypeptide is Large ribosomal subunit protein uL24 (Xanthomonas oryzae pv. oryzae (strain MAFF 311018)).